Consider the following 377-residue polypeptide: Probable O-methyltransferase 3 (377 aa).

D241 is a binding site for S-adenosyl-L-methionine. Residue H279 is the Proton acceptor of the active site.

Belongs to the class I-like SAM-binding methyltransferase superfamily. Cation-independent O-methyltransferase family. As to expression, highly expressed in lupulin glands. Detected in early-, mid- and late-stage cones.

The chain is Probable O-methyltransferase 3 from Humulus lupulus (European hop).